Consider the following 65-residue polypeptide: Large ribosomal subunit protein uL29 (65 aa).

The protein belongs to the universal ribosomal protein uL29 family.

The chain is Large ribosomal subunit protein uL29 from Leptothrix cholodnii (strain ATCC 51168 / LMG 8142 / SP-6) (Leptothrix discophora (strain SP-6)).